A 66-amino-acid polypeptide reads, in one-letter code: Large ribosomal subunit protein bL33c (66 aa).

Belongs to the bacterial ribosomal protein bL33 family.

Its subcellular location is the plastid. The protein resides in the chloroplast. This chain is Large ribosomal subunit protein bL33c, found in Nandina domestica (Heavenly bamboo).